The following is a 311-amino-acid chain: Serpentine receptor class gamma-6 (311 aa).

Helical transmembrane passes span 24-44 (MGQL…IYVI), 58-78 (FWLL…FDIF), 101-121 (PLLI…KMVA), 148-168 (LTAC…NILI), 200-220 (YMQI…AILW), 235-255 (IWFA…YLHM), and 266-286 (IFML…VIMI).

This sequence belongs to the nematode receptor-like protein srg family.

It is found in the membrane. The protein is Serpentine receptor class gamma-6 (srg-6) of Caenorhabditis elegans.